The sequence spans 297 residues: ATP synthase gamma chain (297 aa).

The protein belongs to the ATPase gamma chain family. In terms of assembly, F-type ATPases have 2 components, CF(1) - the catalytic core - and CF(0) - the membrane proton channel. CF(1) has five subunits: alpha(3), beta(3), gamma(1), delta(1), epsilon(1). CF(0) has three main subunits: a, b and c.

The protein resides in the cell membrane. In terms of biological role, produces ATP from ADP in the presence of a proton gradient across the membrane. The gamma chain is believed to be important in regulating ATPase activity and the flow of protons through the CF(0) complex. The sequence is that of ATP synthase gamma chain from Micrococcus luteus (strain ATCC 4698 / DSM 20030 / JCM 1464 / CCM 169 / CCUG 5858 / IAM 1056 / NBRC 3333 / NCIMB 9278 / NCTC 2665 / VKM Ac-2230) (Micrococcus lysodeikticus).